The following is a 245-amino-acid chain: Probable transcriptional regulatory protein BF2589 (245 aa).

The segment at 225–245 is disordered; it reads EDEDVQNVYTNMKPADNEGEE.

This sequence belongs to the TACO1 family.

It localises to the cytoplasm. The sequence is that of Probable transcriptional regulatory protein BF2589 from Bacteroides fragilis (strain ATCC 25285 / DSM 2151 / CCUG 4856 / JCM 11019 / LMG 10263 / NCTC 9343 / Onslow / VPI 2553 / EN-2).